Reading from the N-terminus, the 196-residue chain is Imidazole glycerol phosphate synthase subunit HisH (196 aa).

The region spanning 2–196 (KVAVIKYNAG…ERIIKNFLEL (195 aa)) is the Glutamine amidotransferase type-1 domain. The active-site Nucleophile is the Cys-77. Catalysis depends on residues His-178 and Glu-180.

Heterodimer of HisH and HisF.

It localises to the cytoplasm. It catalyses the reaction 5-[(5-phospho-1-deoxy-D-ribulos-1-ylimino)methylamino]-1-(5-phospho-beta-D-ribosyl)imidazole-4-carboxamide + L-glutamine = D-erythro-1-(imidazol-4-yl)glycerol 3-phosphate + 5-amino-1-(5-phospho-beta-D-ribosyl)imidazole-4-carboxamide + L-glutamate + H(+). It carries out the reaction L-glutamine + H2O = L-glutamate + NH4(+). It participates in amino-acid biosynthesis; L-histidine biosynthesis; L-histidine from 5-phospho-alpha-D-ribose 1-diphosphate: step 5/9. In terms of biological role, IGPS catalyzes the conversion of PRFAR and glutamine to IGP, AICAR and glutamate. The HisH subunit catalyzes the hydrolysis of glutamine to glutamate and ammonia as part of the synthesis of IGP and AICAR. The resulting ammonia molecule is channeled to the active site of HisF. This is Imidazole glycerol phosphate synthase subunit HisH from Bacteroides fragilis (strain YCH46).